We begin with the raw amino-acid sequence, 353 residues long: tRNA U34 carboxymethyltransferase (353 aa).

Residues lysine 101, tryptophan 119, lysine 124, glycine 144, aspartate 166–serine 168, leucine 207–glutamate 208, methionine 227, tyrosine 231, and arginine 346 each bind carboxy-S-adenosyl-L-methionine.

Belongs to the class I-like SAM-binding methyltransferase superfamily. CmoB family. As to quaternary structure, homotetramer.

It carries out the reaction carboxy-S-adenosyl-L-methionine + 5-hydroxyuridine(34) in tRNA = 5-carboxymethoxyuridine(34) in tRNA + S-adenosyl-L-homocysteine + H(+). In terms of biological role, catalyzes carboxymethyl transfer from carboxy-S-adenosyl-L-methionine (Cx-SAM) to 5-hydroxyuridine (ho5U) to form 5-carboxymethoxyuridine (cmo5U) at position 34 in tRNAs. The chain is tRNA U34 carboxymethyltransferase from Psychrobacter sp. (strain PRwf-1).